Here is a 1049-residue protein sequence, read N- to C-terminus: Protein phosphatase 1 regulatory subunit 12A (1049 aa).

6 ANK repeats span residues 39–68 (DDGAVFLAACSSGDTEEVLRMLDRGADINY), 72–101 (DGLTALHQACIDDNVDMVTFLVEHGACINQ), 105–134 (EGWIPLHAAASCGYLDIAEYLISQGASVGV), 138–164 (EGETPLDIAEEEAMEELLQNEINRQGV), 198–227 (SGGTALHVAAAKGYAEVLKLLIQAGYDVNI), and 231–260 (DGWTPLHAAAHWGKEEACRILVEHLCDMDV). The tract at residues 302–947 (LIETTTTGDN…RPYSRFEKDD (646 aa)) is disordered. A compositionally biased stretch (polar residues) spans 303–315 (IETTTTGDNNQSV). The segment covering 319 to 341 (KSKETLLLEPEKTAPRIETLEPE) has biased composition (basic and acidic residues). Positions 359–371 (SEEEEEEDSESEN) are enriched in acidic residues. A compositionally biased stretch (low complexity) spans 378 to 421 (SSVPSSVSNSTPTTAPSSITVTSPTTPSNQVTTPTSPTKKVSTP). Residues 426–436 (SPKEEDRKDES) show a composition bias toward basic and acidic residues. Positions 473-484 (RSASSPRLSSSL) are enriched in low complexity. A compositionally biased stretch (basic and acidic residues) spans 485 to 497 (DNKDKEKEKEKTR). Residues 545–564 (SDGTASTNRTSSYQRSTSHT) show a composition bias toward polar residues. Positions 571-592 (SSSRDLPAKSSSASSLEPNNSK) are enriched in low complexity. Positions 593–607 (AWQPSSYYQSYSIHR) are enriched in polar residues. A compositionally biased stretch (low complexity) spans 620-639 (SSTSSSTTTTTTTSSVTSPT). The segment covering 649-664 (WAEESAEKEKEKEKES) has biased composition (basic and acidic residues). Over residues 665–686 (ATVIPTINTAGTTTTTSTTGTV) the composition is skewed to low complexity. A compositionally biased stretch (basic and acidic residues) spans 702-711 (VRDEESESQR). A compositionally biased stretch (basic residues) spans 712–722 (KARSRQARQSR). A compositionally biased stretch (basic and acidic residues) spans 747 to 789 (RPREDEKEEKEKQDKEKQEEKKETETKEDDYRSRYRSFEEKYR). Over residues 790 to 819 (TSLASSTTASSTIPSSSSSSSSSLYSTSSL) the composition is skewed to low complexity. Positions 820-829 (NRPNSLTGLT) are enriched in polar residues. Over residues 835–863 (STRDTDRESDRKEKDEDRDGDDKSQPRSI) the composition is skewed to basic and acidic residues. Positions 864–875 (RDRRRPREKRRS) are enriched in basic residues. Basic and acidic residues-rich tracts occupy residues 890 to 906 (PDHPSDSEGSTKGEPQS) and 934 to 947 (GESRRPYSRFEKDD).

In terms of assembly, PP1 comprises a catalytic subunit, and one or several targeting or regulatory subunits. Ppp1r12a mediates binding to myosin.

Its subcellular location is the cytoplasm. Its function is as follows. Regulates myosin phosphatase activity. The sequence is that of Protein phosphatase 1 regulatory subunit 12A (ppp1r12a) from Danio rerio (Zebrafish).